Here is a 57-residue protein sequence, read N- to C-terminus: Small ribosomal subunit protein bS21 (57 aa).

It belongs to the bacterial ribosomal protein bS21 family.

This Bacillus pumilus (strain SAFR-032) protein is Small ribosomal subunit protein bS21.